Consider the following 564-residue polypeptide: Proline--tRNA ligase (564 aa).

The protein belongs to the class-II aminoacyl-tRNA synthetase family. ProS type 1 subfamily. As to quaternary structure, homodimer.

The protein localises to the cytoplasm. The enzyme catalyses tRNA(Pro) + L-proline + ATP = L-prolyl-tRNA(Pro) + AMP + diphosphate. Its function is as follows. Catalyzes the attachment of proline to tRNA(Pro) in a two-step reaction: proline is first activated by ATP to form Pro-AMP and then transferred to the acceptor end of tRNA(Pro). As ProRS can inadvertently accommodate and process non-cognate amino acids such as alanine and cysteine, to avoid such errors it has two additional distinct editing activities against alanine. One activity is designated as 'pretransfer' editing and involves the tRNA(Pro)-independent hydrolysis of activated Ala-AMP. The other activity is designated 'posttransfer' editing and involves deacylation of mischarged Ala-tRNA(Pro). The misacylated Cys-tRNA(Pro) is not edited by ProRS. The sequence is that of Proline--tRNA ligase from Xanthomonas axonopodis pv. citri (strain 306).